The sequence spans 514 residues: Flagellin B (514 aa).

This sequence belongs to the bacterial flagellin family. In terms of assembly, heteromer of FlaA and FlaB. FlaB is located proximal to the hook while the remainder of the filament is composed of the predominant FlaA.

It localises to the secreted. The protein resides in the bacterial flagellum. In terms of biological role, flagellin is the subunit protein which polymerizes to form the filaments of bacterial flagella. Important for motility and virulence. The sequence is that of Flagellin B (flaB) from Helicobacter pylori (strain J99 / ATCC 700824) (Campylobacter pylori J99).